The following is a 620-amino-acid chain: 1-deoxy-D-xylulose-5-phosphate synthase (620 aa).

Thiamine diphosphate-binding positions include His-80 and 121-123 (GHS). Residue Asp-152 coordinates Mg(2+). Residues 153–154 (GA), Asn-181, Tyr-288, and Glu-370 contribute to the thiamine diphosphate site. Asn-181 provides a ligand contact to Mg(2+).

The protein belongs to the transketolase family. DXPS subfamily. As to quaternary structure, homodimer. Mg(2+) is required as a cofactor. It depends on thiamine diphosphate as a cofactor.

The enzyme catalyses D-glyceraldehyde 3-phosphate + pyruvate + H(+) = 1-deoxy-D-xylulose 5-phosphate + CO2. The protein operates within metabolic intermediate biosynthesis; 1-deoxy-D-xylulose 5-phosphate biosynthesis; 1-deoxy-D-xylulose 5-phosphate from D-glyceraldehyde 3-phosphate and pyruvate: step 1/1. Catalyzes the acyloin condensation reaction between C atoms 2 and 3 of pyruvate and glyceraldehyde 3-phosphate to yield 1-deoxy-D-xylulose-5-phosphate (DXP). This chain is 1-deoxy-D-xylulose-5-phosphate synthase, found in Escherichia coli O127:H6 (strain E2348/69 / EPEC).